The following is a 362-amino-acid chain: 3-dehydroquinate synthase (362 aa).

NAD(+) contacts are provided by residues aspartate 71–lysine 76, glycine 105–aspartate 109, threonine 129–threonine 130, lysine 142, lysine 151, and cysteine 169–threonine 172. Positions 184, 248, and 265 each coordinate Zn(2+).

The protein belongs to the sugar phosphate cyclases superfamily. Dehydroquinate synthase family. It depends on Co(2+) as a cofactor. Zn(2+) is required as a cofactor. Requires NAD(+) as cofactor.

It is found in the cytoplasm. It carries out the reaction 7-phospho-2-dehydro-3-deoxy-D-arabino-heptonate = 3-dehydroquinate + phosphate. It participates in metabolic intermediate biosynthesis; chorismate biosynthesis; chorismate from D-erythrose 4-phosphate and phosphoenolpyruvate: step 2/7. Catalyzes the conversion of 3-deoxy-D-arabino-heptulosonate 7-phosphate (DAHP) to dehydroquinate (DHQ). The protein is 3-dehydroquinate synthase of Yersinia pseudotuberculosis serotype O:1b (strain IP 31758).